We begin with the raw amino-acid sequence, 1388 residues long: Retrotransposon Gag-like protein 9 (1388 aa).

Disordered stretches follow at residues 491-511, 769-790, 895-918, 1100-1138, and 1336-1388; these read ATASGKMSTPLRRAPTSGAMS, TPLMRTSDPGERPSLLTRASSS, GGVSSPLVRAPASGTMSTPLRRPS, TDSGEASTSHINITASGSKPTSHMTATTPETAKPPPKEV, and AMGN…HTNK. The segment covering 1103-1123 has biased composition (polar residues); sequence GEASTSHINITASGSKPTSHM. Basic and acidic residues predominate over residues 1359–1374; the sequence is YLKEHGDPQEGLHDHL.

The chain is Retrotransposon Gag-like protein 9 from Homo sapiens (Human).